Reading from the N-terminus, the 293-residue chain is Tumor necrosis factor receptor type 1-associated DEATH domain protein (293 aa).

The short motif at 156–171 (LRDDEVTQLEQQLQNS) is the Nuclear export signal element. The Death domain maps to 200–290 (TPADQQRFAA…SMAEIMLGIQ (91 aa)). A Nuclear localization signal motif is present at residues 216 to 229 (KRVGRALQKNCRAL).

In terms of assembly, heterodimer with tnfrsf1a.

It is found in the nucleus. The protein resides in the cytoplasm. It localises to the cytoskeleton. Its function is as follows. Adapter molecule for tnfrsf1a that specifically associates with the cytoplasmic domain of activated tnfrsf1a mediating its interaction with fadd. This chain is Tumor necrosis factor receptor type 1-associated DEATH domain protein, found in Danio rerio (Zebrafish).